The primary structure comprises 431 residues: Transmembrane protease serine 11C (431 aa).

At 1-33 the chain is on the cytoplasmic side; sequence MARGQPRRSEEQWTALQNRTECKTKIKLTRCGK. A helical; Signal-anchor for type II membrane protein transmembrane segment spans residues 34 to 54; the sequence is ITLGILTAVLAAVLIGLIAYF. Over 55–431 the chain is Extracellular; sequence AACGKDSFYY…RDWITSKTGL (377 aa). In terms of domain architecture, SEA spans 60-177; it reads DSFYYHVSFK…SSFKFSDIAM (118 aa). Asparagine 99 carries an N-linked (GlcNAc...) asparagine glycan. The Peptidase S1 domain maps to 200-430; that stretch reads VAGGQDAEEG…YRDWITSKTG (231 aa). Cysteine 225 and cysteine 241 form a disulfide bridge. The active-site Charge relay system is the histidine 240. An N-linked (GlcNAc...) asparagine glycan is attached at asparagine 276. The active-site Charge relay system is aspartate 285. An N-linked (GlcNAc...) asparagine glycan is attached at asparagine 347. Intrachain disulfides connect cysteine 350/cysteine 366 and cysteine 377/cysteine 406. Serine 381 acts as the Charge relay system in catalysis.

Belongs to the peptidase S1 family. In terms of processing, proteolytically cleaved via an autocatalytic mechanism. Expressed specifically in Purkinje neurons of the cerebellum (at protein level). Also detected in spinal cord.

The protein localises to the cell membrane. Its subcellular location is the cell projection. It localises to the dendrite. The protein resides in the perikaryon. In terms of biological role, serine protease which has a preference for Arg or Lys in position P1 and uncharged residues in positions P2 and P3. Shows specificity towards FGF2 in vitro. This chain is Transmembrane protease serine 11C, found in Mus musculus (Mouse).